We begin with the raw amino-acid sequence, 255 residues long: 5-oxoprolinase subunit A (255 aa).

This sequence belongs to the LamB/PxpA family. Forms a complex composed of PxpA, PxpB and PxpC.

It catalyses the reaction 5-oxo-L-proline + ATP + 2 H2O = L-glutamate + ADP + phosphate + H(+). In terms of biological role, catalyzes the cleavage of 5-oxoproline to form L-glutamate coupled to the hydrolysis of ATP to ADP and inorganic phosphate. The protein is 5-oxoprolinase subunit A of Nitrobacter winogradskyi (strain ATCC 25391 / DSM 10237 / CIP 104748 / NCIMB 11846 / Nb-255).